A 171-amino-acid polypeptide reads, in one-letter code: S-ribosylhomocysteine lyase (171 aa).

Fe cation is bound by residues His-54, His-58, and Cys-128.

It belongs to the LuxS family. In terms of assembly, homodimer. The cofactor is Fe cation.

It catalyses the reaction S-(5-deoxy-D-ribos-5-yl)-L-homocysteine = (S)-4,5-dihydroxypentane-2,3-dione + L-homocysteine. In terms of biological role, involved in the synthesis of autoinducer 2 (AI-2) which is secreted by bacteria and is used to communicate both the cell density and the metabolic potential of the environment. The regulation of gene expression in response to changes in cell density is called quorum sensing. Catalyzes the transformation of S-ribosylhomocysteine (RHC) to homocysteine (HC) and 4,5-dihydroxy-2,3-pentadione (DPD). This Escherichia coli O81 (strain ED1a) protein is S-ribosylhomocysteine lyase.